Reading from the N-terminus, the 223-residue chain is Ubiquitin carboxyl-terminal hydrolase isozyme L1 (223 aa).

At methionine 1 the chain carries N-acetylmethionine. The UCH catalytic domain maps to 2 to 221 (QLKPMEINPE…VRFSAVALCK (220 aa)). Residues 5 to 10 (PMEINP) are interaction with ubiquitin. Residue cysteine 90 is the Nucleophile of the active site. Serine 125 bears the Phosphoserine mark. The active-site Proton donor is histidine 161. Residues 211–216 (EVRFSA) are interaction with ubiquitin. Cysteine 220 carries S-farnesyl cysteine lipidation. Positions 221–223 (KAA) are cleaved as a propeptide — removed in mature form.

It belongs to the peptidase C12 family. As to quaternary structure, monomer. Homodimer. Interacts with COPS5 and SNCA. O-glycosylated. In terms of tissue distribution, expressed in brain, where it is found in neurons but not in oligodendrocytes or astrocytes. Found in the ganglion cell layer and the inner nuclear layer of the retina (at protein level). Expressed in brain and testis. In the brain, expression is at its lowest in replaceable neurons of hippocampus and olfactory bulb. Highly expressed in senescent pituitary. In skeletal muscle, primarily expressed in oxidative muscle fibers.

It localises to the cytoplasm. Its subcellular location is the endoplasmic reticulum membrane. The enzyme catalyses Thiol-dependent hydrolysis of ester, thioester, amide, peptide and isopeptide bonds formed by the C-terminal Gly of ubiquitin (a 76-residue protein attached to proteins as an intracellular targeting signal).. In terms of biological role, deubiquitinase that plays a role in the regulation of several processes such as maintenance of synaptic function, cardiac function, inflammatory response or osteoclastogenesis. Abrogates the ubiquitination of multiple proteins including WWTR1/TAZ, EGFR, HIF1A and beta-site amyloid precursor protein cleaving enzyme 1/BACE1. In addition, recognizes and hydrolyzes a peptide bond at the C-terminal glycine of ubiquitin to maintain a stable pool of monoubiquitin that is a key requirement for the ubiquitin-proteasome and the autophagy-lysosome pathways. Regulates amyloid precursor protein/APP processing by promoting BACE1 degradation resulting in decreased amyloid beta production. Plays a role in the immune response by regulating the ability of MHC I molecules to reach cross-presentation compartments competent for generating Ag-MHC I complexes. Mediates the 'Lys-48'-linked deubiquitination of the transcriptional coactivator WWTR1/TAZ leading to its stabilization and inhibition of osteoclastogenesis. Deubiquitinates and stabilizes epidermal growth factor receptor EGFR to prevent its degradation and to activate its downstream mediators. Modulates oxidative activity in skeletal muscle by regulating key mitochondrial oxidative proteins. Enhances the activity of hypoxia-inducible factor 1-alpha/HIF1A by abrogateing its VHL E3 ligase-mediated ubiquitination and consequently inhibiting its degradation. This Mus musculus (Mouse) protein is Ubiquitin carboxyl-terminal hydrolase isozyme L1 (Uchl1).